A 1440-amino-acid chain; its full sequence is MAFLCAPGLTFFLTYSIFSAVLGMLQFGYNTGVINAPEKNIENFMKDVYKDRYGEDISEEFIQQLYSVAVSIFAIGGMLGGFSGGWMANRFGRKGGLLLNNVLGIAGACLMGFTKVSHSYEMLFLGRFIIGVNCGLNTSLVPMYISEIAPLNLRGGLGTVNQLAVTVGLLLSQVLGIEQILGTNEGWPILLGLAICPAILQLILLPVCPESPRYLLITKQWEEEARKALRRLRASGSVEEDIEEMRAEERAQQSESHISTMELICSPTLRPPLIIGIVMQLSQQFSGINAVFYYSTSLFMSSGLTEESAKFATIGIGAIMVVMTLVSIPLMDRTGRRTLHLYGLGGMFIFSIFITISFLIKEMIDWMSYLSVVATLGFVVFFAVGPGSIPWMITAELFSQGPRPSAMAIAVLVNWMANFVVGIGFPSMKTALENYTFLPFSVFLAIFWIFTYKKVPETKNKTFEEILALFRHNNGRSMLNCTNSLEPQSMNSGIEHAALMVSEEKTQHDSLFGTTSFSLTVEGMGPYPLSDSTNLLGPGSSSYGPGGVLGLAGSGSGLGGQCYTNYGTNLQTPQAARKCHYDEVDDYSFRRHSAHGRITQMKGKPLILGPTIKKDKKKERTDWLTASERFLEGGRSTHQGRSAASAPHHPRQPPPVCPSSGPXLRSASPPDSASVRSTSRAEEPHQPQQVHHQQQQVHHQQQHQSRYATHEYVHCSYEKEVVCDQANPSQAPPQQPAPPVQQHQQQPPPPLHHCQQRKHSHSPHHSRHTSPHSHHHHSHHSRHSRRSRRQGSGSLPGAHQGSANHSVMRPSICTSRRHRSVTDISTTNVCQDPACSDREVQEIMVRRTCCNTTATNSSSRTELAQCFAEDLYGSSRRPSSCCTSSDYCYQTDSTSLYGSRSSLSRNNSIKSASALVRKHHRSQRSLLPEHRHPSYTSISLRGLNASRPNSQLGSLTSIFDRAKNMAPEGSTLERQSSKGALGSSELPEYACSPSPIRWSFLADGRSPSEMEGAVGGGPEREQEEEDKLDAWQVPEPEPEKKPCRKITTSSSVYDEGPSTSAAAARKRRGSKGSRGSKGSGSYHCEFEDEATTTVMFHQDAGEAYNNCCSNNYNYIQCNTYLDQDLQITSEDIHQYLSKGDATASDILNNSKNYPFQPSNALEFQYKNNFQQGQANANNNNTNTTNTASSDAAECFQNYRAISKETNLNQTSTEQLSPTNINLSTSSNNINIVFSSSLERNANEVKFINNRSGASGGSEMGCEVGHHAGYLPYTYPSYDYTNMSGNSHFEKPLGIDELPKEFCGLEGAGGGGASTTSEHSSSLPSPQPLTHHQQLHHFESFDAASEHNLLAAQPMSPGSPLSGSVNPAGDDFVQMHHYHHANSPHSQSHHSHAHTHTHGHHVHHLLNHPAYDLTDDQFRLGSALKRVRKRARKYTDFLRKK.

An N-terminal signal peptide occupies residues 1-23 (MAFLCAPGLTFFLTYSIFSAVLG). Residues 24–67 (MLQFGYNTGVINAPEKNIENFMKDVYKDRYGEDISEEFIQQLYS) lie on the Cytoplasmic side of the membrane. The chain crosses the membrane as a helical span at residues 68 to 88 (VAVSIFAIGGMLGGFSGGWMA). Residues 89 to 95 (NRFGRKG) are Extracellular-facing. Residues 96–116 (GLLLNNVLGIAGACLMGFTKV) traverse the membrane as a helical segment. Residues 117-127 (SHSYEMLFLGR) are Cytoplasmic-facing. Residues 128–148 (FIIGVNCGLNTSLVPMYISEI) traverse the membrane as a helical segment. Topologically, residues 149-162 (APLNLRGGLGTVNQ) are extracellular. D-glucose is bound at residue Q162. A helical transmembrane segment spans residues 163-183 (LAVTVGLLLSQVLGIEQILGT). The Cytoplasmic segment spans residues 184 to 186 (NEG). The chain crosses the membrane as a helical span at residues 187-207 (WPILLGLAICPAILQLILLPV). The Extracellular portion of the chain corresponds to 208–272 (CPESPRYLLI…LICSPTLRPP (65 aa)). The helical transmembrane segment at 273–293 (LIIGIVMQLSQQFSGINAVFY) threads the bilayer. D-glucose is bound by residues 283–284 (QQ) and N289. Residues 294–310 (YSTSLFMSSGLTEESAK) lie on the Cytoplasmic side of the membrane. A helical membrane pass occupies residues 311–331 (FATIGIGAIMVVMTLVSIPLM). At 332–339 (DRTGRRTL) the chain is on the extracellular side. The chain crosses the membrane as a helical span at residues 340–360 (HLYGLGGMFIFSIFITISFLI). Residues 361-372 (KEMIDWMSYLSV) are Cytoplasmic-facing. The chain crosses the membrane as a helical span at residues 373-393 (VATLGFVVFFAVGPGSIPWMI). W391 contacts D-glucose. Residues 394–405 (TAELFSQGPRPS) lie on the Extracellular side of the membrane. Residues 406-426 (AMAIAVLVNWMANFVVGIGFP) form a helical membrane-spanning segment. Topologically, residues 427–429 (SMK) are cytoplasmic. Residues 430–450 (TALENYTFLPFSVFLAIFWIF) form a helical membrane-spanning segment. Residues 451 to 534 (TYKKVPETKN…GPYPLSDSTN (84 aa)) are Extracellular-facing. Residues N460 and N480 are each glycosylated (N-linked (GlcNAc...) asparagine). A helical transmembrane segment spans residues 535 to 555 (LLGPGSSSYGPGGVLGLAGSG). Residues 556–1440 (SGLGGQCYTN…RKYTDFLRKK (885 aa)) lie on the Cytoplasmic side of the membrane. 6 disordered regions span residues 628–708 (ERFL…SRYA), 725–808 (QANP…HSVM), 966–987 (APEGSTLERQSSKGALGSSELP), 1000–1083 (FLAD…GSYH), 1304–1330 (LEGAGGGGASTTSEHSSSLPSPQPLTH), and 1380–1401 (ANSPHSQSHHSHAHTHTHGHHV). The segment covering 669-678 (PPDSASVRST) has biased composition (polar residues). The span at 686–704 (QPQQVHHQQQQVHHQQQHQ) shows a compositional bias: low complexity. The span at 730–739 (QAPPQQPAPP) shows a compositional bias: pro residues. Positions 754–789 (CQQRKHSHSPHHSRHTSPHSHHHHSHHSRHSRRSRR) are enriched in basic residues. Positions 1313 to 1330 (STTSEHSSSLPSPQPLTH) are enriched in low complexity.

It belongs to the major facilitator superfamily. Sugar transporter (TC 2.A.1.1) family. Glucose transporter subfamily.

Its subcellular location is the membrane. In terms of biological role, facilitative glucose transporter. This is Glucose transporter type 1 (Glut1) from Drosophila melanogaster (Fruit fly).